The sequence spans 305 residues: Translation initiation factor eIF2B subunit alpha (305 aa).

K35 is subject to N6-acetyllysine.

The protein belongs to the eIF-2B alpha/beta/delta subunits family. Component of the translation initiation factor 2B (eIF2B) complex which is a heterodecamer of two sets of five different subunits: alpha, beta, gamma, delta and epsilon. Subunits alpha, beta and delta comprise a regulatory subcomplex and subunits epsilon and gamma comprise a catalytic subcomplex. Within the complex, the hexameric regulatory complex resides at the center, with the two heterodimeric catalytic subcomplexes bound on opposite sides.

The protein localises to the cytoplasm. The protein resides in the cytosol. With respect to regulation, activated by the chemical integrated stress response (ISR) inhibitor ISRIB which stimulates guanine nucleotide exchange factor activity for both phosphorylated and unphosphorylated eIF2. Its function is as follows. Acts as a component of the translation initiation factor 2B (eIF2B) complex, which catalyzes the exchange of GDP for GTP on eukaryotic initiation factor 2 (eIF2) gamma subunit. Its guanine nucleotide exchange factor activity is repressed when bound to eIF2 complex phosphorylated on the alpha subunit, thereby limiting the amount of methionyl-initiator methionine tRNA available to the ribosome and consequently global translation is repressed. The protein is Translation initiation factor eIF2B subunit alpha (EIF2B1) of Pongo abelii (Sumatran orangutan).